The sequence spans 359 residues: Peptide chain release factor 1 (359 aa).

Gln235 bears the N5-methylglutamine mark. The interval 282-306 (RQRADSERSADRKSQVGSGDRSERI) is disordered.

The protein belongs to the prokaryotic/mitochondrial release factor family. In terms of processing, methylated by PrmC. Methylation increases the termination efficiency of RF1.

The protein resides in the cytoplasm. Peptide chain release factor 1 directs the termination of translation in response to the peptide chain termination codons UAG and UAA. The sequence is that of Peptide chain release factor 1 from Rhizobium rhizogenes (strain K84 / ATCC BAA-868) (Agrobacterium radiobacter).